Reading from the N-terminus, the 188-residue chain is MRVYNCHFCSSPVYPGKGIMFVRNDSKEFRFCRSKCHKNFKMKRNPRKLRWTKAFRKAAGKEMVVDSTLAFSARRDVPVRYNRDLVEKTLEAMEKVEEIRLKRERAFYKNRMRGNKAAQLEEDRKLVEAHPELLREREVELRRMQEAGEDDDDEDMSEMEVSEEEESEEEREKVEIALKSKSKRKMRA.

Residues 140–188 are disordered; sequence ELRRMQEAGEDDDDEDMSEMEVSEEEESEEEREKVEIALKSKSKRKMRA. The segment covering 147–169 has biased composition (acidic residues); it reads AGEDDDDEDMSEMEVSEEEESEE.

This sequence belongs to the eukaryotic ribosomal protein eL24 family. In terms of assembly, associated with nucleolar and cytoplasmic pre-60S particles. At the end of biogenesis it dissociates from cytoplasmic pre-60S particles and is likely to be exchanged for its ribosomal homolog, RPL24.

Its subcellular location is the cytoplasm. It is found in the nucleus. In terms of biological role, involved in the biogenesis of the 60S ribosomal subunit. Ensures the docking of YALI0_B00990g/NOG1 to pre-60S particles. Activates and recruits ATPase AFG2 to cytoplasmic pre-60S ribosomal particles. The sequence is that of Ribosome biogenesis protein RLP24 (RLP24) from Yarrowia lipolytica (strain CLIB 122 / E 150) (Yeast).